A 359-amino-acid chain; its full sequence is S-adenosylmethionine:tRNA ribosyltransferase-isomerase (359 aa).

This sequence belongs to the QueA family. In terms of assembly, monomer.

The protein localises to the cytoplasm. It catalyses the reaction 7-aminomethyl-7-carbaguanosine(34) in tRNA + S-adenosyl-L-methionine = epoxyqueuosine(34) in tRNA + adenine + L-methionine + 2 H(+). Its pathway is tRNA modification; tRNA-queuosine biosynthesis. Functionally, transfers and isomerizes the ribose moiety from AdoMet to the 7-aminomethyl group of 7-deazaguanine (preQ1-tRNA) to give epoxyqueuosine (oQ-tRNA). The protein is S-adenosylmethionine:tRNA ribosyltransferase-isomerase of Alcanivorax borkumensis (strain ATCC 700651 / DSM 11573 / NCIMB 13689 / SK2).